Consider the following 88-residue polypeptide: Phosphocarrier protein HPr (88 aa).

The HPr domain occupies 2-88 (AQKTFKVTAD…ETMKSEGLGE (87 aa)). The residue at position 12 (Ser-12) is a Phosphoserine. His-15 functions as the Pros-phosphohistidine intermediate; alternate in the catalytic mechanism. A Tele-phosphohistidine; alternate modification is found at His-15. A Phosphoserine; by HPrK/P modification is found at Ser-46.

The protein belongs to the HPr family. In terms of processing, phosphorylated during sporulation.

The protein resides in the cytoplasm. Phosphorylation on Ser-46 inhibits the phosphoryl transfer from enzyme I to HPr. Its function is as follows. General (non sugar-specific) component of the phosphoenolpyruvate-dependent sugar phosphotransferase system (sugar PTS). This major carbohydrate active-transport system catalyzes the phosphorylation of incoming sugar substrates concomitantly with their translocation across the cell membrane. The phosphoryl group from phosphoenolpyruvate (PEP) is transferred to the phosphoryl carrier protein HPr by enzyme I. Phospho-HPr then transfers it to the PTS EIIA domain. In terms of biological role, P-Ser-HPr interacts with the catabolite control protein A (CcpA), forming a complex that binds to DNA at the catabolite response elements cre, operator sites preceding a large number of catabolite-regulated genes. Thus, P-Ser-HPr is a corepressor in carbon catabolite repression (CCR), a mechanism that allows bacteria to coordinate and optimize the utilization of available carbon sources. P-Ser-HPr also plays a role in inducer exclusion, in which it probably interacts with several non-PTS permeases and inhibits their transport activity. This Bacillus subtilis (strain 168) protein is Phosphocarrier protein HPr (ptsH).